Here is a 193-residue protein sequence, read N- to C-terminus: Xanthine phosphoribosyltransferase (193 aa).

Leu20 and Asn27 together coordinate xanthine. 128–132 contacts 5-phospho-alpha-D-ribose 1-diphosphate; the sequence is ANGEA. Residue Lys156 coordinates xanthine.

Belongs to the purine/pyrimidine phosphoribosyltransferase family. Xpt subfamily. In terms of assembly, homodimer.

The protein resides in the cytoplasm. It carries out the reaction XMP + diphosphate = xanthine + 5-phospho-alpha-D-ribose 1-diphosphate. The protein operates within purine metabolism; XMP biosynthesis via salvage pathway; XMP from xanthine: step 1/1. Its function is as follows. Converts the preformed base xanthine, a product of nucleic acid breakdown, to xanthosine 5'-monophosphate (XMP), so it can be reused for RNA or DNA synthesis. In Exiguobacterium sp. (strain ATCC BAA-1283 / AT1b), this protein is Xanthine phosphoribosyltransferase.